The sequence spans 256 residues: Thiazole synthase (256 aa).

The Schiff-base intermediate with DXP role is filled by Lys95. Residues Gly156, 183-184 (AG), and 205-206 (NT) contribute to the 1-deoxy-D-xylulose 5-phosphate site.

It belongs to the ThiG family. Homotetramer. Forms heterodimers with either ThiH or ThiS.

The protein resides in the cytoplasm. It carries out the reaction [ThiS sulfur-carrier protein]-C-terminal-Gly-aminoethanethioate + 2-iminoacetate + 1-deoxy-D-xylulose 5-phosphate = [ThiS sulfur-carrier protein]-C-terminal Gly-Gly + 2-[(2R,5Z)-2-carboxy-4-methylthiazol-5(2H)-ylidene]ethyl phosphate + 2 H2O + H(+). Its pathway is cofactor biosynthesis; thiamine diphosphate biosynthesis. Functionally, catalyzes the rearrangement of 1-deoxy-D-xylulose 5-phosphate (DXP) to produce the thiazole phosphate moiety of thiamine. Sulfur is provided by the thiocarboxylate moiety of the carrier protein ThiS. In vitro, sulfur can be provided by H(2)S. The protein is Thiazole synthase of Gluconacetobacter diazotrophicus (strain ATCC 49037 / DSM 5601 / CCUG 37298 / CIP 103539 / LMG 7603 / PAl5).